The following is a 503-amino-acid chain: Probable cytosol aminopeptidase (503 aa).

Mn(2+) contacts are provided by Lys-274 and Asp-279. The active site involves Lys-286. Residues Asp-297, Asp-356, and Glu-358 each coordinate Mn(2+). The active site involves Arg-360.

The protein belongs to the peptidase M17 family. Requires Mn(2+) as cofactor.

The protein localises to the cytoplasm. The catalysed reaction is Release of an N-terminal amino acid, Xaa-|-Yaa-, in which Xaa is preferably Leu, but may be other amino acids including Pro although not Arg or Lys, and Yaa may be Pro. Amino acid amides and methyl esters are also readily hydrolyzed, but rates on arylamides are exceedingly low.. It catalyses the reaction Release of an N-terminal amino acid, preferentially leucine, but not glutamic or aspartic acids.. Presumably involved in the processing and regular turnover of intracellular proteins. Catalyzes the removal of unsubstituted N-terminal amino acids from various peptides. This Burkholderia thailandensis (strain ATCC 700388 / DSM 13276 / CCUG 48851 / CIP 106301 / E264) protein is Probable cytosol aminopeptidase.